A 212-amino-acid polypeptide reads, in one-letter code: Imidazole glycerol phosphate synthase subunit HisH (212 aa).

The Glutamine amidotransferase type-1 domain maps to 3-208; that stretch reads RIVIVDYGMG…GRMVCDLIST (206 aa). The active-site Nucleophile is the Cys-81. Active-site residues include His-183 and Glu-185.

Heterodimer of HisH and HisF.

The protein localises to the cytoplasm. It carries out the reaction 5-[(5-phospho-1-deoxy-D-ribulos-1-ylimino)methylamino]-1-(5-phospho-beta-D-ribosyl)imidazole-4-carboxamide + L-glutamine = D-erythro-1-(imidazol-4-yl)glycerol 3-phosphate + 5-amino-1-(5-phospho-beta-D-ribosyl)imidazole-4-carboxamide + L-glutamate + H(+). It catalyses the reaction L-glutamine + H2O = L-glutamate + NH4(+). Its pathway is amino-acid biosynthesis; L-histidine biosynthesis; L-histidine from 5-phospho-alpha-D-ribose 1-diphosphate: step 5/9. In terms of biological role, IGPS catalyzes the conversion of PRFAR and glutamine to IGP, AICAR and glutamate. The HisH subunit catalyzes the hydrolysis of glutamine to glutamate and ammonia as part of the synthesis of IGP and AICAR. The resulting ammonia molecule is channeled to the active site of HisF. This is Imidazole glycerol phosphate synthase subunit HisH from Symbiobacterium thermophilum (strain DSM 24528 / JCM 14929 / IAM 14863 / T).